The primary structure comprises 278 residues: Undecaprenyl-diphosphatase 1 (278 aa).

6 consecutive transmembrane segments (helical) span residues 45–65, 95–115, 119–139, 191–211, 225–245, and 256–276; these read AVIG…LVYF, WWVI…KPLI, LASL…MWWA, VAAT…AGLY, PLAV…AWLL, and FVVY…TGVL.

Belongs to the UppP family.

It is found in the cell membrane. It carries out the reaction di-trans,octa-cis-undecaprenyl diphosphate + H2O = di-trans,octa-cis-undecaprenyl phosphate + phosphate + H(+). Catalyzes the dephosphorylation of undecaprenyl diphosphate (UPP). Confers resistance to bacitracin. The polypeptide is Undecaprenyl-diphosphatase 1 (Streptomyces coelicolor (strain ATCC BAA-471 / A3(2) / M145)).